The primary structure comprises 325 residues: Tumor necrosis factor soluble receptor (325 aa).

Positions 1–16 are cleaved as a signal peptide; the sequence is MLRLIALLVCVVYVYG. TNFR-Cys repeat units lie at residues 27 to 62, 63 to 104, 105 to 147, and 148 to 186; these read KCGGHDYEKDGLCCASCHPGFYASRLCGPGSNTVCS, PCED…DRVC, NCST…TLCE, and KCPPHTYSDSLSPTERCGTSFNYISVGFNLYPVNETSCT. 6 disulfide bridges follow: cysteine 28–cysteine 39, cysteine 40–cysteine 53, cysteine 43–cysteine 61, cysteine 64–cysteine 79, cysteine 82–cysteine 96, and cysteine 86–cysteine 104. The N-linked (GlcNAc...) asparagine; by host glycan is linked to asparagine 105. 4 disulfides stabilise this stretch: cysteine 106–cysteine 120, cysteine 123–cysteine 146, cysteine 129–cysteine 149, and cysteine 164–cysteine 185. N-linked (GlcNAc...) asparagine; by host glycosylation is found at asparagine 181, asparagine 205, and asparagine 238.

Functionally, binds to TNF-alpha and beta. Probably prevents TNF to reach cellular target and thereby deampening the potential antiviral effects of the cytokine. The polypeptide is Tumor necrosis factor soluble receptor (Oryctolagus cuniculus (Rabbit)).